The primary structure comprises 310 residues: Probable cell division protein WhiA (310 aa).

Positions 277 to 310 (SLKELAEQVPDGPISKSGVNHRLKKLHEIAENLR) form a DNA-binding region, H-T-H motif.

The protein belongs to the WhiA family.

In terms of biological role, involved in cell division and chromosome segregation. This is Probable cell division protein WhiA from Lactobacillus delbrueckii subsp. bulgaricus (strain ATCC 11842 / DSM 20081 / BCRC 10696 / JCM 1002 / NBRC 13953 / NCIMB 11778 / NCTC 12712 / WDCM 00102 / Lb 14).